A 224-amino-acid chain; its full sequence is Pleckstrin homology domain-containing family B member 2 (224 aa).

The 108-residue stretch at 2 to 109 (AFVKSGWLLR…WKIALQDART (108 aa)) folds into the PH domain. Position 20 (Lys-20) interacts with a 1,2-diacyl-sn-glycero-3-phospho-L-serine.

It is found in the recycling endosome membrane. Its function is as follows. Involved in retrograde transport of recycling endosomes. In Gallus gallus (Chicken), this protein is Pleckstrin homology domain-containing family B member 2 (PLEKHB2).